The chain runs to 375 residues: 23S rRNA (uracil(747)-C(5))-methyltransferase RlmC (375 aa).

4 residues coordinate [4Fe-4S] cluster: Cys3, Cys11, Cys14, and Cys87. Residues Gln212, Phe241, Glu262, and Asn307 each coordinate S-adenosyl-L-methionine. The Nucleophile role is filled by Cys334.

This sequence belongs to the class I-like SAM-binding methyltransferase superfamily. RNA M5U methyltransferase family. RlmC subfamily.

The enzyme catalyses uridine(747) in 23S rRNA + S-adenosyl-L-methionine = 5-methyluridine(747) in 23S rRNA + S-adenosyl-L-homocysteine + H(+). Its function is as follows. Catalyzes the formation of 5-methyl-uridine at position 747 (m5U747) in 23S rRNA. The polypeptide is 23S rRNA (uracil(747)-C(5))-methyltransferase RlmC (Xenorhabdus nematophila (strain ATCC 19061 / DSM 3370 / CCUG 14189 / LMG 1036 / NCIMB 9965 / AN6)).